The sequence spans 205 residues: Octanoyltransferase (205 aa).

Residues 29-204 (AETPDEIWIV…HLLQQLDQKN (176 aa)) enclose the BPL/LPL catalytic domain. Residues 68–75 (RGGQVTYH), 135–137 (ALG), and 148–150 (GVS) each bind substrate. Residue Cys166 is the Acyl-thioester intermediate of the active site.

Belongs to the LipB family.

The protein resides in the cytoplasm. The catalysed reaction is octanoyl-[ACP] + L-lysyl-[protein] = N(6)-octanoyl-L-lysyl-[protein] + holo-[ACP] + H(+). It functions in the pathway protein modification; protein lipoylation via endogenous pathway; protein N(6)-(lipoyl)lysine from octanoyl-[acyl-carrier-protein]: step 1/2. Its function is as follows. Catalyzes the transfer of endogenously produced octanoic acid from octanoyl-acyl-carrier-protein onto the lipoyl domains of lipoate-dependent enzymes. Lipoyl-ACP can also act as a substrate although octanoyl-ACP is likely to be the physiological substrate. The polypeptide is Octanoyltransferase (Dechloromonas aromatica (strain RCB)).